The sequence spans 472 residues: DEAD-box ATP-dependent RNA helicase 58, chloroplastic (472 aa).

Residues 1–54 (MASQLLNVPHLAFFPKISYASVFSTLKPSFFHSTSTRRALKSSPSSRIINLQAV) constitute a chloroplast transit peptide. Residues 76–104 (RQICQGFVPEHILHRMEEIGFVFPTDIQR) carry the Q motif motif. The region spanning 107–286 (LPTLFTGRDC…DCIQQKWTKR (180 aa)) is the Helicase ATP-binding domain. 120–127 (AQTGSGKT) provides a ligand contact to ATP. The DEAD box motif lies at 231–234 (DEVD). The Helicase C-terminal domain maps to 314-472 (NKHQVLLALL…LMFSCEEMML (159 aa)).

Belongs to the DEAD box helicase family.

The protein resides in the plastid. Its subcellular location is the chloroplast. It carries out the reaction ATP + H2O = ADP + phosphate + H(+). This is DEAD-box ATP-dependent RNA helicase 58, chloroplastic (RH58) from Arabidopsis thaliana (Mouse-ear cress).